The following is a 943-amino-acid chain: Isoleucine--tRNA ligase (943 aa).

The 'HIGH' region signature appears at 58–68; that stretch reads PYANGNIHIGH. Glu-567 contributes to the L-isoleucyl-5'-AMP binding site. The short motif at 608–612 is the 'KMSKS' region element; that stretch reads KMSKS. Lys-611 is an ATP binding site. Positions 906, 909, 926, and 929 each coordinate Zn(2+).

Belongs to the class-I aminoacyl-tRNA synthetase family. IleS type 1 subfamily. Monomer. Zn(2+) is required as a cofactor.

The protein localises to the cytoplasm. It carries out the reaction tRNA(Ile) + L-isoleucine + ATP = L-isoleucyl-tRNA(Ile) + AMP + diphosphate. In terms of biological role, catalyzes the attachment of isoleucine to tRNA(Ile). As IleRS can inadvertently accommodate and process structurally similar amino acids such as valine, to avoid such errors it has two additional distinct tRNA(Ile)-dependent editing activities. One activity is designated as 'pretransfer' editing and involves the hydrolysis of activated Val-AMP. The other activity is designated 'posttransfer' editing and involves deacylation of mischarged Val-tRNA(Ile). This is Isoleucine--tRNA ligase from Azotobacter vinelandii (strain DJ / ATCC BAA-1303).